A 329-amino-acid polypeptide reads, in one-letter code: MSQIVVCAMYKFVTLEDFEAMRQPLLDTMIKNNVKGTLLLANEGINGTVAGTRESIDNLLAYLKSDPRLVDIDYKESYHQEMPFYRSKVKLKKEIVTLGVDEIDPNKICGKYVEPKDWNDLISDPETVLIDTRNEYEIEIGTFKNAINPHTENFREFPQYVDENLDPKKHKKVAMFCTGGIRCEKSTALLKAKGFDEVYHLKGGILKYLEEVPKEKSMWQGECFVFDSRVAVNHDLEKGNYDQCFACRMPITEDDKKRPEYVKGISCHHCYDKVTEKQKARFAEREKQSQLAAEKGFSHIGDEAKKLAQLNKQKKQQAKEAARKKTEKN.

Positions S123–S217 constitute a Rhodanese domain. The active-site Cysteine persulfide intermediate is C177. A disordered region spans residues L310–N329. Basic and acidic residues predominate over residues Q317–N329.

The protein belongs to the TrhO family.

The catalysed reaction is uridine(34) in tRNA + AH2 + O2 = 5-hydroxyuridine(34) in tRNA + A + H2O. Functionally, catalyzes oxygen-dependent 5-hydroxyuridine (ho5U) modification at position 34 in tRNAs. The sequence is that of tRNA uridine(34) hydroxylase from Francisella tularensis subsp. novicida (strain U112).